The chain runs to 149 residues: Arginine repressor (149 aa).

The protein belongs to the ArgR family.

It localises to the cytoplasm. It participates in amino-acid biosynthesis; L-arginine biosynthesis [regulation]. In terms of biological role, regulates arginine biosynthesis genes. The chain is Arginine repressor from Halalkalibacterium halodurans (strain ATCC BAA-125 / DSM 18197 / FERM 7344 / JCM 9153 / C-125) (Bacillus halodurans).